Here is a 393-residue protein sequence, read N- to C-terminus: MQQTKKLTHSDITIAVMSGPFLQRGEPALVSKWYRTKMALACGVDLVVELPYAFSTQKAETFANGAISILNALHVSEICFGSEDGQIENFYNTVSAQKNEEETFNRLVKQFMNAGNSYAKATSEAFLHILSSEKNIDMSQPNNILGFQYIKAILMQNSSMQAQTIKRFASHYHDETFNDQHIASATSIRKQLFSENSSFTEIESFIPKATASLLASYKQNYGTLHNWEQYFSFFKYKLMTMSPKDLQHIYEIEEGLEHRILSKIQTSSSFHSFMEALKTKRYTWTRLQRACTHILTNTTKEEIHCANIEQHAPYIRLLGMSQKGQTYLSKNKKKIELPILTHTKTFDHPTLHIERKANSVYFSIMKEPLRTQLLKRDATHHPIRYDETTAKFL.

Residues glycine 81, asparagine 142, and arginine 167 each contribute to the ATP site.

Belongs to the TmcAL family.

It is found in the cytoplasm. The catalysed reaction is cytidine(34) in elongator tRNA(Met) + acetate + ATP = N(4)-acetylcytidine(34) in elongator tRNA(Met) + AMP + diphosphate. In terms of biological role, catalyzes the formation of N(4)-acetylcytidine (ac(4)C) at the wobble position of elongator tRNA(Met), using acetate and ATP as substrates. First activates an acetate ion to form acetyladenylate (Ac-AMP) and then transfers the acetyl group to tRNA to form ac(4)C34. The protein is tRNA(Met) cytidine acetate ligase of Bacillus cereus (strain ZK / E33L).